The sequence spans 199 residues: Prolactin-2 (199 aa).

Cystine bridges form between Cys-4–Cys-11, Cys-58–Cys-174, and Cys-191–Cys-199.

It belongs to the somatotropin/prolactin family.

It localises to the secreted. This is Prolactin-2 from Alligator mississippiensis (American alligator).